The primary structure comprises 607 residues: Fucose-1-phosphate guanylyltransferase (607 aa).

The segment at 1-21 (MRAVRRGLREGGAMAAARDPP) is disordered.

Expressed in many tissues.

Its subcellular location is the cytoplasm. It catalyses the reaction beta-L-fucose 1-phosphate + GTP + H(+) = GDP-beta-L-fucose + diphosphate. Functionally, catalyzes the formation of GDP-L-fucose from GTP and L-fucose-1-phosphate. Functions as a salvage pathway to reutilize L-fucose arising from the turnover of glycoproteins and glycolipids. The protein is Fucose-1-phosphate guanylyltransferase of Homo sapiens (Human).